The sequence spans 166 residues: Large ribosomal subunit protein uL10 (166 aa).

It belongs to the universal ribosomal protein uL10 family. As to quaternary structure, part of the ribosomal stalk of the 50S ribosomal subunit. The N-terminus interacts with L11 and the large rRNA to form the base of the stalk. The C-terminus forms an elongated spine to which L12 dimers bind in a sequential fashion forming a multimeric L10(L12)X complex.

Functionally, forms part of the ribosomal stalk, playing a central role in the interaction of the ribosome with GTP-bound translation factors. The polypeptide is Large ribosomal subunit protein uL10 (Oceanobacillus iheyensis (strain DSM 14371 / CIP 107618 / JCM 11309 / KCTC 3954 / HTE831)).